A 356-amino-acid chain; its full sequence is GDSL esterase/lipase At5g37690 (356 aa).

Residues 1 to 18 form the signal peptide; it reads MMILRLALAIVISTYATA. Ser-34 serves as the catalytic Nucleophile. N-linked (GlcNAc...) asparagine glycans are attached at residues Asn-116 and Asn-291. Catalysis depends on residues Asp-322 and His-325.

The protein belongs to the 'GDSL' lipolytic enzyme family.

The protein localises to the secreted. The chain is GDSL esterase/lipase At5g37690 from Arabidopsis thaliana (Mouse-ear cress).